The sequence spans 516 residues: Beta-glucosidase 1 (516 aa).

A signal peptide spans Met-1–Ala-21. Gln-68 contributes to the a beta-D-glucoside binding site. Asn-96 carries N-linked (GlcNAc...) asparagine glycosylation. A beta-D-glucoside-binding positions include His-169 and Asn-214–Glu-215. Catalysis depends on Glu-215, which acts as the Proton donor. The cysteines at positions 234 and 237 are disulfide-linked. A glycan (N-linked (GlcNAc...) asparagine) is linked at Asn-290. A beta-D-glucoside is bound at residue Tyr-353. Residue Asn-364 is glycosylated (N-linked (GlcNAc...) asparagine). Glu-424 is a binding site for a beta-D-glucoside. Glu-424 acts as the Nucleophile in catalysis. A glycan (N-linked (GlcNAc...) asparagine) is linked at Asn-432. A beta-D-glucoside-binding positions include Trp-471, Glu-478–Trp-479, and Phe-487.

It belongs to the glycosyl hydrolase 1 family.

It carries out the reaction Hydrolysis of terminal, non-reducing beta-D-glucosyl residues with release of beta-D-glucose.. This Oryza sativa subsp. japonica (Rice) protein is Beta-glucosidase 1 (BGLU1).